The chain runs to 234 residues: uncharacterized protein (234 aa).

A helical membrane pass occupies residues 13 to 32 (KSINYYIFFFQYTLVYNTIQ). Disordered regions lie at residues 102–130 (HSKT…SSNS) and 159–185 (ESDS…SEYE). Positions 103 to 130 (SKTTSLPFSSSSPQSSSSSSSSSSSSNS) are enriched in low complexity. Positions 167 to 185 (EFDSESNSDFDSESESEYE) are enriched in acidic residues.

It localises to the membrane. This is an uncharacterized protein from Dictyostelium discoideum (Social amoeba).